The primary structure comprises 369 residues: Histidinol-phosphate aminotransferase (369 aa).

At lysine 223 the chain carries N6-(pyridoxal phosphate)lysine.

It belongs to the class-II pyridoxal-phosphate-dependent aminotransferase family. Histidinol-phosphate aminotransferase subfamily. Homodimer. It depends on pyridoxal 5'-phosphate as a cofactor.

The enzyme catalyses L-histidinol phosphate + 2-oxoglutarate = 3-(imidazol-4-yl)-2-oxopropyl phosphate + L-glutamate. The protein operates within amino-acid biosynthesis; L-histidine biosynthesis; L-histidine from 5-phospho-alpha-D-ribose 1-diphosphate: step 7/9. This Shouchella clausii (strain KSM-K16) (Alkalihalobacillus clausii) protein is Histidinol-phosphate aminotransferase.